A 179-amino-acid chain; its full sequence is Large ribosomal subunit protein uL5 (179 aa).

This sequence belongs to the universal ribosomal protein uL5 family. As to quaternary structure, part of the 50S ribosomal subunit; part of the 5S rRNA/L5/L18/L25 subcomplex. Contacts the 5S rRNA and the P site tRNA. Forms a bridge to the 30S subunit in the 70S ribosome.

In terms of biological role, this is one of the proteins that bind and probably mediate the attachment of the 5S RNA into the large ribosomal subunit, where it forms part of the central protuberance. In the 70S ribosome it contacts protein S13 of the 30S subunit (bridge B1b), connecting the 2 subunits; this bridge is implicated in subunit movement. Contacts the P site tRNA; the 5S rRNA and some of its associated proteins might help stabilize positioning of ribosome-bound tRNAs. The polypeptide is Large ribosomal subunit protein uL5 (Xylella fastidiosa (strain M12)).